A 218-amino-acid chain; its full sequence is Enhancer of split M2 protein (218 aa).

Residues methionine 1–lysine 25 show a composition bias toward low complexity. Disordered regions lie at residues methionine 1 to methionine 30, asparagine 64 to proline 86, and glycine 137 to alanine 164. Over residues serine 147–serine 163 the composition is skewed to low complexity.

Its function is as follows. Part of the Notch signaling pathway. The protein is Enhancer of split M2 protein of Drosophila melanogaster (Fruit fly).